An 87-amino-acid polypeptide reads, in one-letter code: Selenoprotein W (87 aa).

Residues 10-13 constitute a cross-link (cysteinyl-selenocysteine (Cys-Sec); redox-active); the sequence is CGAU. A non-standard amino acid (selenocysteine) is located at residue Sec13. Position 37 is an S-glutathionyl cysteine (Cys37).

The protein belongs to the SelWTH family. Selenoprotein W subfamily. Interacts with DPYSL2, PRDX1, YWHAB, YWHAG, HSP70 and HSP90. In terms of tissue distribution, detected in muscle, heart, tongue, brain, lung, spleen, kidney and liver. Highest levels expressed in muscle and heart whereas lowest levels detected in liver (at protein level).

It localises to the cytoplasm. Its function is as follows. Plays a role as a glutathione (GSH)-dependent antioxidant. May be involved in a redox-related process. May play a role in the myopathies of selenium deficiency. In Ovis aries (Sheep), this protein is Selenoprotein W.